The chain runs to 706 residues: uncharacterized protein (706 aa).

This is an uncharacterized protein from Rickettsia prowazekii (strain Madrid E).